The sequence spans 91 residues: Large ribosomal subunit protein uL23c (91 aa).

This sequence belongs to the universal ribosomal protein uL23 family. As to quaternary structure, part of the 50S ribosomal subunit.

It is found in the plastid. It localises to the chloroplast. Binds to 23S rRNA. This chain is Large ribosomal subunit protein uL23c (rpl23), found in Picea abies (Norway spruce).